A 253-amino-acid polypeptide reads, in one-letter code: Imidazole glycerol phosphate synthase subunit HisF (253 aa).

Residues Asp-11 and Asp-130 contribute to the active site.

This sequence belongs to the HisA/HisF family. Heterodimer of HisH and HisF.

The protein resides in the cytoplasm. The catalysed reaction is 5-[(5-phospho-1-deoxy-D-ribulos-1-ylimino)methylamino]-1-(5-phospho-beta-D-ribosyl)imidazole-4-carboxamide + L-glutamine = D-erythro-1-(imidazol-4-yl)glycerol 3-phosphate + 5-amino-1-(5-phospho-beta-D-ribosyl)imidazole-4-carboxamide + L-glutamate + H(+). It participates in amino-acid biosynthesis; L-histidine biosynthesis; L-histidine from 5-phospho-alpha-D-ribose 1-diphosphate: step 5/9. Functionally, IGPS catalyzes the conversion of PRFAR and glutamine to IGP, AICAR and glutamate. The HisF subunit catalyzes the cyclization activity that produces IGP and AICAR from PRFAR using the ammonia provided by the HisH subunit. The protein is Imidazole glycerol phosphate synthase subunit HisF of Cereibacter sphaeroides (strain KD131 / KCTC 12085) (Rhodobacter sphaeroides).